A 153-amino-acid chain; its full sequence is Ribonuclease HI (153 aa).

The RNase H type-1 domain maps to 1–141 (MKSVNIFTDG…CDELAKLGAN (141 aa)). Residues aspartate 9, glutamate 47, aspartate 69, and aspartate 133 each contribute to the Mg(2+) site.

It belongs to the RNase H family. As to quaternary structure, monomer. Requires Mg(2+) as cofactor.

The protein localises to the cytoplasm. It carries out the reaction Endonucleolytic cleavage to 5'-phosphomonoester.. Endonuclease that specifically degrades the RNA of RNA-DNA hybrids. This chain is Ribonuclease HI, found in Haemophilus ducreyi (strain 35000HP / ATCC 700724).